The primary structure comprises 126 residues: Larval cuticle protein 2 (126 aa).

Positions 1 to 16 (MFKFVMVFAVLGLAAA) are cleaved as a signal peptide. The 62-residue stretch at 39-100 (ADGFDTDLVV…PVGAVLPTPP (62 aa)) folds into the Chitin-binding type R&amp;R domain.

Its function is as follows. Component of the larval cuticle. In Drosophila miranda (Fruit fly), this protein is Larval cuticle protein 2 (Lcp2).